The chain runs to 339 residues: Transposase for insertion sequence element IS1086 (339 aa).

One can recognise an Integrase catalytic domain in the interval 176–329; the sequence is DRLMPGHWEG…SPLQVLAQVL (154 aa).

The protein belongs to the transposase IS30 family.

Its function is as follows. Required for the transposition of the insertion element. This Cupriavidus metallidurans (strain ATCC 43123 / DSM 2839 / NBRC 102507 / CH34) (Ralstonia metallidurans) protein is Transposase for insertion sequence element IS1086 (IS1086).